Consider the following 606-residue polypeptide: Pickpocket protein 28 (606 aa).

The tract at residues 1–26 is disordered; that stretch reads MRTLTESRRRQSGSSGCKKDSESDDD. 2 consecutive transmembrane segments (helical) span residues 66–86 and 490–510; these read IFFG…ISNV and GLLG…FFYI.

It belongs to the amiloride-sensitive sodium channel (TC 1.A.6) family. As to expression, expressed in water-sensing neurons in taste bristles on the proboscis but not in carbonation-sensing taste peg neurons (at protein level). Expressed in the tracheal system.

It localises to the cell membrane. Osmosensitive ion channel that mediates the cellular and behavioral response to water. Plays an essential role in gustatory water reception. Part of a complex that plays a role in tracheal liquid clearance. Probable role in sodium transport. This chain is Pickpocket protein 28 (ppk28), found in Drosophila melanogaster (Fruit fly).